Consider the following 298-residue polypeptide: Acetylglutamate kinase (298 aa).

Substrate contacts are provided by residues 69–70 (GG), Arg91, and Asn191.

The protein belongs to the acetylglutamate kinase family. ArgB subfamily.

The protein resides in the cytoplasm. It carries out the reaction N-acetyl-L-glutamate + ATP = N-acetyl-L-glutamyl 5-phosphate + ADP. Its pathway is amino-acid biosynthesis; L-arginine biosynthesis; N(2)-acetyl-L-ornithine from L-glutamate: step 2/4. Catalyzes the ATP-dependent phosphorylation of N-acetyl-L-glutamate. In Neisseria gonorrhoeae (strain ATCC 700825 / FA 1090), this protein is Acetylglutamate kinase.